A 370-amino-acid polypeptide reads, in one-letter code: Cyanuric acid amidohydrolase (370 aa).

Positions 1-103 are RU A; sequence MQAQVFRVPM…TIFTVQKTDN (103 aa). Residues R51 and 82-83 each bind substrate; that span reads SG. Positions 113 to 250 are RU B; the sequence is RLAVQQIFTR…NEIIVMGNSR (138 aa). K163 is a catalytic residue. Substrate contacts are provided by residues R195 and 233-234; that span reads SA. S233 serves as the catalytic Nucleophile. Residues 256–370 form an RU C region; sequence LVIGHAEMKD…GPVAVIARTA (115 aa). E303 lines the Mg(2+) pocket. Substrate is bound by residues R330 and 349 to 350; that span reads SG. Mg(2+)-binding residues include S352, Q355, G356, P357, and G360.

Belongs to the cyclic amide hydrolase (CyAH) family. Homotetramer.

It carries out the reaction cyanurate + H2O = 1-carboxybiuret + H(+). The protein operates within xenobiotic degradation; atrazine degradation; biuret from cyanurate: step 1/1. With respect to regulation, inhibited by barbituric acid. In terms of biological role, responsible for the hydrolysis of cyanuric acid, an intermediate formed during catabolism of s-triazine based compounds in herbicides such as atrazine and polymers such as melamine. Catalyzes the hydrolytic opening of the s-triazine ring of cyanuric acid (2,4,6-trihydroxy-s-triazine) to yield carbon dioxide and carboxybiuret, which spontaneously decarboxylates to biuret. This is Cyanuric acid amidohydrolase (trzD) from Pseudomonas sp.